The primary structure comprises 208 residues: MNVNTARTSAVIVHPVPPAYADCYLVWQQSITTAAAQFDGYQGTDIYPPENDRDPNWIAVLHFQTPADLQGWLDSPQRAEILAQLPPELAGYSKTVLPQGFAPWFSQLLHKPPSWKMALTVLLALYPTVLLLNLLITPHLQGLGRAGAVLVGNAIGVALMQWGIMPRLTRLLKPWLSADSDRRFSVLGGAAIVSILLLLAHLFQRWFF.

This is an uncharacterized protein from Synechococcus elongatus (strain ATCC 33912 / PCC 7942 / FACHB-805) (Anacystis nidulans R2).